The chain runs to 59 residues: Potassium channel toxin alpha-KTx 15.2 (59 aa).

The N-terminal stretch at M1 to C22 is a signal peptide. Q23 bears the Pyrrolidone carboxylic acid mark. 3 cysteine pairs are disulfide-bonded: C30-C50, C35-C55, and C39-C57.

This sequence belongs to the short scorpion toxin superfamily. Potassium channel inhibitor family. Alpha-KTx 15 subfamily. In terms of tissue distribution, expressed by the venom gland.

The protein resides in the secreted. Its function is as follows. Blocks both human ERG1/Kv11.1/KCNH2 potassium channels (in a reversible manner) and A-type voltage-gated potassium channels Kv4/KCND (in an irreversible manner). The presence of the Kv4-associated proteins DPP6 or DPP10 is mandatory to have high-affinity blockade of Kv4.2/KCND2 and Kv4.3/KCND3 channels. In contrast, the presence of the Kv4-associated protein KChIP1/KCNIP1 does not enhance the affinity blockade. May dispose of two functional faces (A and B); the two basic residues (Arg-40 and Lys-41) on the alpha-helix side of the peptide that blocks the hERG current (face A) and the typical dyad through which it blocks A-type currents on the beta-sheet side (face B). In adult rat brain, it binds to sites in the striatum, hippocampus, superior colliculus, and cerebellum. It shares the same target in rat brain than AaTX1 (AC Q867F4) and AmmTX3 (AC P60208). In DPP6 knockout mice, A-type currents are much less affected by the toxin than in wild-type mice. The protein is Potassium channel toxin alpha-KTx 15.2 of Olivierus martensii (Manchurian scorpion).